The chain runs to 442 residues: Histidinol dehydrogenase (442 aa).

NAD(+) contacts are provided by tyrosine 132, glutamine 194, and asparagine 217. Residues serine 243, glutamine 265, and histidine 268 each coordinate substrate. Zn(2+) contacts are provided by glutamine 265 and histidine 268. Catalysis depends on proton acceptor residues glutamate 332 and histidine 333. Residues histidine 333, aspartate 366, glutamate 420, and histidine 425 each contribute to the substrate site. Aspartate 366 provides a ligand contact to Zn(2+). Residue histidine 425 coordinates Zn(2+).

Belongs to the histidinol dehydrogenase family. Requires Zn(2+) as cofactor.

The catalysed reaction is L-histidinol + 2 NAD(+) + H2O = L-histidine + 2 NADH + 3 H(+). Its pathway is amino-acid biosynthesis; L-histidine biosynthesis; L-histidine from 5-phospho-alpha-D-ribose 1-diphosphate: step 9/9. Its function is as follows. Catalyzes the sequential NAD-dependent oxidations of L-histidinol to L-histidinaldehyde and then to L-histidine. The protein is Histidinol dehydrogenase of Idiomarina loihiensis (strain ATCC BAA-735 / DSM 15497 / L2-TR).